The sequence spans 72 residues: MTKEDCIEMQGVVIDTLPNTMFRVQLDNKHIVTAHISGKMRKNYIRILTGDKVTLELTPYDLSKGRIIFRSR.

The 72-residue stretch at 1 to 72 (MTKEDCIEMQ…SKGRIIFRSR (72 aa)) folds into the S1-like domain.

This sequence belongs to the IF-1 family. As to quaternary structure, component of the 30S ribosomal translation pre-initiation complex which assembles on the 30S ribosome in the order IF-2 and IF-3, IF-1 and N-formylmethionyl-tRNA(fMet); mRNA recruitment can occur at any time during PIC assembly.

The protein resides in the cytoplasm. One of the essential components for the initiation of protein synthesis. Stabilizes the binding of IF-2 and IF-3 on the 30S subunit to which N-formylmethionyl-tRNA(fMet) subsequently binds. Helps modulate mRNA selection, yielding the 30S pre-initiation complex (PIC). Upon addition of the 50S ribosomal subunit IF-1, IF-2 and IF-3 are released leaving the mature 70S translation initiation complex. This chain is Translation initiation factor IF-1, found in Buchnera aphidicola subsp. Baizongia pistaciae (strain Bp).